The following is a 344-amino-acid chain: MSNAITMGIFWHLIGAASAACFYAPFKQVKQWSWETMWSVGGIVSWLILPWAISALLLPDFWAYYGQFNLSTLLPVFLFGAMWGIGNINYGLTMRYLGMSMGIGIAIGITLIVGTLMTPIINGNFDVLIHTEGGRMTLLGVFVALIGVGIVTRAGQLKERKMGIKAEEFNLKKGLLLAVMCGIFSAGMSFAMNAAKPMHEAAAALGVDPLYVALPSYVVIMGGGALVNLGFCFIRLAKVQNLSIKADFSLSRPLIISNILLSALGGLMWYLQFFFYAWGHARIPAQYDYMSWMLHMSFYVLCGGLVGLVLKEWKNAGRRPVAVLSLGCVVIIIAANIVGLGMTS.

10 consecutive transmembrane segments (helical) span residues 4-24 (AITM…CFYA), 38-58 (WSVG…ALLL), 68-88 (FNLS…IGNI), 101-121 (MGIG…TPII), 137-157 (TLLG…AGQL), 175-195 (LLLA…MNAA), 214-234 (LPSY…FCFI), 259-279 (ILLS…YAWG), 290-310 (MSWM…GLVL), and 321-341 (VAVL…VGLG).

It belongs to the L-rhamnose transporter (TC 2.A.7.6) family.

It localises to the cell inner membrane. It carries out the reaction L-rhamnopyranose(in) + H(+)(in) = L-rhamnopyranose(out) + H(+)(out). Its function is as follows. Uptake of L-rhamnose across the cytoplasmic membrane with the concomitant transport of protons into the cell (symport system). The chain is L-rhamnose-proton symporter from Salmonella gallinarum (strain 287/91 / NCTC 13346).